Consider the following 119-residue polypeptide: Large ribosomal subunit protein bL20c (119 aa).

Belongs to the bacterial ribosomal protein bL20 family.

It is found in the plastid. The protein localises to the chloroplast. Binds directly to 23S ribosomal RNA and is necessary for the in vitro assembly process of the 50S ribosomal subunit. It is not involved in the protein synthesizing functions of that subunit. The protein is Large ribosomal subunit protein bL20c of Brachypodium distachyon (Purple false brome).